The primary structure comprises 502 residues: Maturase K (502 aa).

The protein belongs to the intron maturase 2 family. MatK subfamily.

Its subcellular location is the plastid. The protein resides in the chloroplast. Functionally, usually encoded in the trnK tRNA gene intron. Probably assists in splicing its own and other chloroplast group II introns. In Ipomoea purpurea (Common morning glory), this protein is Maturase K.